Here is a 203-residue protein sequence, read N- to C-terminus: N-(5'-phosphoribosyl)anthranilate isomerase (203 aa).

This sequence belongs to the TrpF family.

The enzyme catalyses N-(5-phospho-beta-D-ribosyl)anthranilate = 1-(2-carboxyphenylamino)-1-deoxy-D-ribulose 5-phosphate. The protein operates within amino-acid biosynthesis; L-tryptophan biosynthesis; L-tryptophan from chorismate: step 3/5. This chain is N-(5'-phosphoribosyl)anthranilate isomerase, found in Geotalea uraniireducens (strain Rf4) (Geobacter uraniireducens).